Reading from the N-terminus, the 78-residue chain is MDRKRTKLELLFAFIINATAIYIALAIYDCVFRGKDFLSMHTFCFSALMSAICYFVGDNYYSISDKIKRRSYENSDSK.

In terms of biological role, this protein is able to protect a cell, which harbors the plasmid ColV encoding colicin V, against colicin V. This is Colicin-V immunity protein (cvi) from Escherichia coli.